The chain runs to 223 residues: Endonuclease V (223 aa).

Mg(2+) is bound by residues aspartate 35 and aspartate 103.

The protein belongs to the endonuclease V family. Mg(2+) serves as cofactor.

The protein resides in the cytoplasm. It catalyses the reaction Endonucleolytic cleavage at apurinic or apyrimidinic sites to products with a 5'-phosphate.. DNA repair enzyme involved in the repair of deaminated bases. Selectively cleaves double-stranded DNA at the second phosphodiester bond 3' to a deoxyinosine leaving behind the intact lesion on the nicked DNA. The chain is Endonuclease V from Klebsiella pneumoniae subsp. pneumoniae (strain ATCC 700721 / MGH 78578).